A 310-amino-acid chain; its full sequence is Alpha/beta hydrolase domain-containing protein 17A (310 aa).

The tract at residues 38-61 is disordered; sequence VPEPEPGPGGAGAAPSGPLRTSAA. Active-site charge relay system residues include serine 190, aspartate 255, and histidine 284. Serine 307 carries the phosphoserine modification.

The protein belongs to the AB hydrolase superfamily. ABHD17 family. Post-translationally, palmitoylated on cysteine residues located in a cysteine cluster at the N-terminus which promotes membrane localization. Palmitoylation is required for post-synaptic localization and for depalmitoylating activity towards DLG4/PSD95.

It is found in the cell membrane. Its subcellular location is the endosome membrane. The protein localises to the cell projection. The protein resides in the dendritic spine. It localises to the postsynaptic density membrane. The catalysed reaction is S-hexadecanoyl-L-cysteinyl-[protein] + H2O = L-cysteinyl-[protein] + hexadecanoate + H(+). Its function is as follows. Hydrolyzes fatty acids from S-acylated cysteine residues in proteins. Has depalmitoylating activity towards NRAS. Has depalmitoylating activity towards DLG4/PSD95. May have depalmitoylating activity towars MAP6. The chain is Alpha/beta hydrolase domain-containing protein 17A from Mus musculus (Mouse).